The primary structure comprises 199 residues: Early nodulin-like protein 3 (199 aa).

The signal sequence occupies residues 1–23; that stretch reads MGLVMRFDLYLMFVMLMGLGFTI. The region spanning 27-128 is the Phytocyanin domain; that stretch reads YKFYVGGKDG…GQKLAVKVLS (102 aa). Residues N57 and N83 are each glycosylated (N-linked (GlcNAc...) asparagine). A disulfide bridge links C82 with C116. The disordered stretch occupies residues 130 to 180; sequence VHHSHSPRHTSPSPSPVHQELSSPGPSPGVEPSSDSNSRVPAPGPATAPNS. Over residues 138–165 the composition is skewed to low complexity; the sequence is HTSPSPSPVHQELSSPGPSPGVEPSSDS. A lipid anchor (GPI-anchor amidated asparagine) is attached at N179. Residues 180-199 constitute a propeptide, removed in mature form; the sequence is SAGLVGPGMVVLVIMISSLF.

The protein belongs to the early nodulin-like (ENODL) family. In terms of tissue distribution, confined to flowers.

Its subcellular location is the cell membrane. May act as a carbohydrate transporter. This chain is Early nodulin-like protein 3, found in Arabidopsis thaliana (Mouse-ear cress).